The chain runs to 190 residues: Potassium-transporting ATPase KdpC subunit (190 aa).

A helical membrane pass occupies residues 10 to 30 (TFLFLLLITGGVYPLLTTALG).

It belongs to the KdpC family. The system is composed of three essential subunits: KdpA, KdpB and KdpC.

Its subcellular location is the cell inner membrane. In terms of biological role, part of the high-affinity ATP-driven potassium transport (or Kdp) system, which catalyzes the hydrolysis of ATP coupled with the electrogenic transport of potassium into the cytoplasm. This subunit acts as a catalytic chaperone that increases the ATP-binding affinity of the ATP-hydrolyzing subunit KdpB by the formation of a transient KdpB/KdpC/ATP ternary complex. The protein is Potassium-transporting ATPase KdpC subunit of Escherichia coli O45:K1 (strain S88 / ExPEC).